Reading from the N-terminus, the 413-residue chain is Divalent metal cation transporter MntH (413 aa).

At M1–L19 the chain is on the cytoplasmic side. Residues A20–A39 traverse the membrane as a helical segment. Over T40–Q51 the chain is Periplasmic. Residues L52–A71 form a helical membrane-spanning segment. Over K72 to W95 the chain is Cytoplasmic. A helical transmembrane segment spans residues F96–I118. The Periplasmic portion of the chain corresponds to G119–G125. The helical transmembrane segment at V126–L145 threads the bilayer. The Cytoplasmic portion of the chain corresponds to Q146–K155. Residues V156–S175 form a helical membrane-spanning segment. The Periplasmic segment spans residues Q176 to A196. The helical transmembrane segment at V197 to T220 threads the bilayer. The Cytoplasmic portion of the chain corresponds to Q221–D238. The chain crosses the membrane as a helical span at residues V239–A258. Residues A259 to Y276 are Periplasmic-facing. The helical transmembrane segment at L277–A297 threads the bilayer. Over A298–R327 the chain is Cytoplasmic. The helical transmembrane segment at R328 to D344 threads the bilayer. Residues P345–V350 lie on the Periplasmic side of the membrane. The helical transmembrane segment at M351–F370 threads the bilayer. The Cytoplasmic portion of the chain corresponds to T371–K387. A helical membrane pass occupies residues Q388 to V406. At G407–S413 the chain is on the periplasmic side.

It belongs to the NRAMP family.

The protein resides in the cell inner membrane. In terms of biological role, h(+)-stimulated, divalent metal cation uptake system. In Salmonella paratyphi C (strain RKS4594), this protein is Divalent metal cation transporter MntH.